The sequence spans 395 residues: Phosphopentomutase (395 aa).

Residues D16, D289, H294, D330, H331, and H342 each coordinate Mn(2+).

It belongs to the phosphopentomutase family. Mn(2+) is required as a cofactor.

Its subcellular location is the cytoplasm. It carries out the reaction 2-deoxy-alpha-D-ribose 1-phosphate = 2-deoxy-D-ribose 5-phosphate. The enzyme catalyses alpha-D-ribose 1-phosphate = D-ribose 5-phosphate. Its pathway is carbohydrate degradation; 2-deoxy-D-ribose 1-phosphate degradation; D-glyceraldehyde 3-phosphate and acetaldehyde from 2-deoxy-alpha-D-ribose 1-phosphate: step 1/2. In terms of biological role, isomerase that catalyzes the conversion of deoxy-ribose 1-phosphate (dRib-1-P) and ribose 1-phosphate (Rib-1-P) to deoxy-ribose 5-phosphate (dRib-5-P) and ribose 5-phosphate (Rib-5-P), respectively. This Geobacillus kaustophilus (strain HTA426) protein is Phosphopentomutase.